The sequence spans 213 residues: DNA-directed RNA polymerase subunit alpha (213 aa).

It belongs to the RNA polymerase alpha chain family. As to quaternary structure, in plastids the minimal PEP RNA polymerase catalytic core is composed of four subunits: alpha, beta, beta', and beta''. When a (nuclear-encoded) sigma factor is associated with the core the holoenzyme is formed, which can initiate transcription.

The protein resides in the plastid. Its subcellular location is the chloroplast. It carries out the reaction RNA(n) + a ribonucleoside 5'-triphosphate = RNA(n+1) + diphosphate. Its function is as follows. DNA-dependent RNA polymerase catalyzes the transcription of DNA into RNA using the four ribonucleoside triphosphates as substrates. This chain is DNA-directed RNA polymerase subunit alpha (rpoA), found in Euglena stellata.